A 572-amino-acid chain; its full sequence is Vacuolar protein sorting-associated protein vps901 (572 aa).

2 stretches are compositionally biased toward basic and acidic residues: residues 1 to 31 (MDYPSFHEDPTKDESTVAEQRKGQSNEEKPL) and 39 to 53 (DEQRNAYNEHCKNHD). The tract at residues 1–108 (MDYPSFHEDP…HENNPGQQEI (108 aa)) is disordered. The span at 69 to 80 (QYEQTDSSSDQE) shows a compositional bias: polar residues. The segment covering 82 to 98 (MNEKQSLDKENRNDNIP) has biased composition (basic and acidic residues). Residues 219–357 (VEEDRVLSEK…IETLDCSSLT (139 aa)) enclose the VPS9 domain. Residues 430-502 (QIDTPESKEY…IVHEEQPVDD (73 aa)) are disordered. The span at 445-457 (PRGSSHSGSFTTD) shows a compositional bias: polar residues. One can recognise a CUE domain in the interval 529–571 (REKAEAITALRAMFPAFDSEVIEVVLNAQQGRLSSSIDSLLEM).

Required for vacuolar protein sorting; may be required for the consumption of transport vesicles containing vacuolar protein precursors. Required for vacuolar fusion. The sequence is that of Vacuolar protein sorting-associated protein vps901 (vps901) from Schizosaccharomyces pombe (strain 972 / ATCC 24843) (Fission yeast).